Consider the following 119-residue polypeptide: Large ribosomal subunit protein bL20 (119 aa).

The protein belongs to the bacterial ribosomal protein bL20 family.

In terms of biological role, binds directly to 23S ribosomal RNA and is necessary for the in vitro assembly process of the 50S ribosomal subunit. It is not involved in the protein synthesizing functions of that subunit. This Erythrobacter litoralis (strain HTCC2594) protein is Large ribosomal subunit protein bL20.